Reading from the N-terminus, the 154-residue chain is Iron-sulfur cluster assembly 2 homolog, mitochondrial (154 aa).

A mitochondrion-targeting transit peptide spans 1-8; the sequence is MAAAWGSS. The interval 29 to 49 is disordered; it reads SLGPQARREASSSSPEAGEGQ. Residues 39–49 show a composition bias toward low complexity; the sequence is SSSSPEAGEGQ. Cysteine 79, cysteine 144, and cysteine 146 together coordinate Fe cation.

It belongs to the HesB/IscA family. Heterotetramer; forms a dimer of dimers with IBA57. Interacts with [2Fe-2S]-ISCA2 forming the heterodimer [2Fe- 2S]-ISCA2-IBA57 complex; [2Fe-2S] cluster binding is absolutely required to promote the complex formation.

It localises to the mitochondrion. Its function is as follows. Involved in the maturation of mitochondrial 4Fe-4S proteins functioning late in the iron-sulfur cluster assembly pathway. May be involved in the binding of an intermediate of Fe/S cluster assembly. The protein is Iron-sulfur cluster assembly 2 homolog, mitochondrial (ISCA2) of Homo sapiens (Human).